We begin with the raw amino-acid sequence, 213 residues long: Small ribosomal subunit protein uS3 (213 aa).

One can recognise a KH type-2 domain in the interval 38–106 (IRSYIKKLLY…EFSLEVTEVR (69 aa)).

Belongs to the universal ribosomal protein uS3 family. As to quaternary structure, part of the 30S ribosomal subunit. Forms a tight complex with proteins S10 and S14.

Its function is as follows. Binds the lower part of the 30S subunit head. Binds mRNA in the 70S ribosome, positioning it for translation. The chain is Small ribosomal subunit protein uS3 from Lawsonia intracellularis (strain PHE/MN1-00).